The following is a 355-amino-acid chain: MTELKNDRYLRALLKQPVDYTPVWMMRQAGRYLPEYRATRAQAGDFMALCKNAELASEVTLQPLRRFPLDAAILFSDILTIPDAMGLGLRFAAGEGPVFERPITCKADVDKIGIPDPEGELQYVMNAVRQIRKDLQGEVPLIGFSGSPWTLATYMVEGGSSKAFTKIKKMMYSEPTVLHALLDKLADSVISYLNAQIKAGAQAVMVFDTWGGVLTPRDYQQFSLQYMHKIVDGLIRENEGRRVPVTLFTKNGGMWLEQIAATGCDAVGLDWTINIADAKARVGDKVALQGNMDPSILYAPAPRIREEVASILAGFGQGGTGHVFNLGHGIHLDVPPENAGVFVEAVHELSKPYHP.

Residues 27-31, aspartate 77, tyrosine 154, threonine 209, and histidine 328 each bind substrate; that span reads RQAGR.

Belongs to the uroporphyrinogen decarboxylase family. As to quaternary structure, homodimer.

It localises to the cytoplasm. It catalyses the reaction uroporphyrinogen III + 4 H(+) = coproporphyrinogen III + 4 CO2. The protein operates within porphyrin-containing compound metabolism; protoporphyrin-IX biosynthesis; coproporphyrinogen-III from 5-aminolevulinate: step 4/4. In terms of biological role, catalyzes the decarboxylation of four acetate groups of uroporphyrinogen-III to yield coproporphyrinogen-III. This is Uroporphyrinogen decarboxylase from Vibrio cholerae serotype O1 (strain ATCC 39541 / Classical Ogawa 395 / O395).